The following is a 63-amino-acid chain: MKASELTAKSVEELNAELLGLLREQFNLRMQHATGQLTQTHQLKIVRRNIARVKTIITSKAGA.

It belongs to the universal ribosomal protein uL29 family.

The sequence is that of Large ribosomal subunit protein uL29 from Shewanella pealeana (strain ATCC 700345 / ANG-SQ1).